The following is a 465-amino-acid chain: UDP-N-acetylmuramate--L-alanine ligase (465 aa).

An ATP-binding site is contributed by 114 to 120 (GAHGKTT).

It belongs to the MurCDEF family.

It localises to the cytoplasm. It catalyses the reaction UDP-N-acetyl-alpha-D-muramate + L-alanine + ATP = UDP-N-acetyl-alpha-D-muramoyl-L-alanine + ADP + phosphate + H(+). The protein operates within cell wall biogenesis; peptidoglycan biosynthesis. Its function is as follows. Cell wall formation. This chain is UDP-N-acetylmuramate--L-alanine ligase, found in Syntrophomonas wolfei subsp. wolfei (strain DSM 2245B / Goettingen).